The following is a 217-amino-acid chain: Probable GTP-binding protein EngB (217 aa).

Residues 29–213 (GPSEVAFAGR…RQAIAQTVGI (185 aa)) form the EngB-type G domain. GTP contacts are provided by residues 37–44 (GRSNVGKS), 64–68 (GRTQE), 91–94 (DMPG), 158–161 (TKTD), and 192–194 (TSS). Mg(2+) contacts are provided by S44 and T66.

The protein belongs to the TRAFAC class TrmE-Era-EngA-EngB-Septin-like GTPase superfamily. EngB GTPase family. The cofactor is Mg(2+).

Its function is as follows. Necessary for normal cell division and for the maintenance of normal septation. The protein is Probable GTP-binding protein EngB of Rhizobium etli (strain CIAT 652).